The primary structure comprises 155 residues: Protein SprT-like (155 aa).

The SprT-like domain maps to 6–148 (LQRLVERVSL…VCGQCGGKLM (143 aa)). Histidine 67 contacts Zn(2+). Residue glutamate 68 is part of the active site. Zn(2+) is bound at residue histidine 71.

Belongs to the SprT family. Zn(2+) is required as a cofactor.

Its subcellular location is the cytoplasm. This Geobacillus sp. (strain WCH70) protein is Protein SprT-like.